The following is a 243-amino-acid chain: Adenosylcobinamide-GDP ribazoletransferase (243 aa).

Helical transmembrane passes span 33–53, 59–79, 105–125, 127–147, 172–192, and 223–243; these read FLPV…LLAP, IIIV…HIDG, IGAF…TLAY, TENM…VFAA, VISI…GAII, and TIEI…SIII.

The protein belongs to the CobS family. The cofactor is Mg(2+).

It localises to the cell membrane. It catalyses the reaction alpha-ribazole + adenosylcob(III)inamide-GDP = adenosylcob(III)alamin + GMP + H(+). The enzyme catalyses alpha-ribazole 5'-phosphate + adenosylcob(III)inamide-GDP = adenosylcob(III)alamin 5'-phosphate + GMP + H(+). Its pathway is cofactor biosynthesis; adenosylcobalamin biosynthesis; adenosylcobalamin from cob(II)yrinate a,c-diamide: step 7/7. Functionally, joins adenosylcobinamide-GDP and alpha-ribazole to generate adenosylcobalamin (Ado-cobalamin). Also synthesizes adenosylcobalamin 5'-phosphate from adenosylcobinamide-GDP and alpha-ribazole 5'-phosphate. The protein is Adenosylcobinamide-GDP ribazoletransferase of Alkaliphilus oremlandii (strain OhILAs) (Clostridium oremlandii (strain OhILAs)).